A 1465-amino-acid chain; its full sequence is DNA polymerase alpha catalytic subunit (1465 aa).

Disordered regions lie at residues 20–39 (GSFAASRARREKKSKKGRQE) and 105–135 (LEDDALDTCGKGSDGKAHRKDRKDVKKPSVT). A compositionally biased stretch (basic residues) spans 26 to 35 (RARREKKSKK). Threonine 180 is subject to Phosphothreonine. A phosphoserine mark is found at serine 192 and serine 215. Lysine 230 is subject to N6-acetyllysine. The interval 261–297 (DESMDTEKVDEKPVTAKTWDQETEPVERVEHEADPER) is disordered. Basic and acidic residues-rich tracts occupy residues 265-274 (DTEKVDEKPV) and 285-297 (PVERVEHEADPER). A DNA-binding region spans residues 654-719 (RINECKVPYW…YHLSELVQQI (66 aa)). At lysine 974 the chain carries N6-succinyllysine. The DNA-binding stretch occupies residues 1249 to 1380 (QFRVHQYHKD…NGPLCPVCMK (132 aa)). Residues cysteine 1287, cysteine 1290, cysteine 1314, cysteine 1319, cysteine 1352, cysteine 1357, cysteine 1375, and cysteine 1378 each coordinate Zn(2+). The segment at 1287–1317 (CPSCGTENIYDNVFEGSGLDMEPSLYRCSNV) adopts a CysA-type zinc-finger fold. Positions 1352-1378 (CEEPTCCSRLRRLPLHFSRNGPLCPVC) match the CysB motif motif.

The protein belongs to the DNA polymerase type-B family. As to quaternary structure, component of the alpha DNA polymerase complex (also known as the alpha DNA polymerase-primase complex) consisting of four subunits: the catalytic subunit POLA1, the regulatory subunit POLA2, and the primase complex subunits PRIM1 and PRIM2 respectively. Within the complex, POLA1 directly interacts with PRIM2. Interacts with PARP1; this interaction functions as part of the control of replication fork progression. Interacts with MCM10 and WDHD1; these interactions recruit the polymerase alpha complex to the pre-replicative complex bound to DNA. Interacts with RPA1; this interaction stabilizes the replicative complex and reduces the misincorporation rate of DNA polymerase alpha by acting as a fidelity clamp. In terms of tissue distribution, expressed in those zones containing proliferating cells in the developing embryonic neocortex, as well as in the lateral and medial ganglionic eminences. After birth, expressed in cells that remain proliferating in the ventricular and subventricular zone of the striatum.

The protein resides in the nucleus. The protein localises to the cytoplasm. It is found in the cytosol. The enzyme catalyses DNA(n) + a 2'-deoxyribonucleoside 5'-triphosphate = DNA(n+1) + diphosphate. Its function is as follows. Catalytic subunit of the DNA polymerase alpha complex (also known as the alpha DNA polymerase-primase complex) which plays an essential role in the initiation of DNA synthesis. During the S phase of the cell cycle, the DNA polymerase alpha complex (composed of a catalytic subunit POLA1, a regulatory subunit POLA2 and two primase subunits PRIM1 and PRIM2) is recruited to DNA at the replicative forks via direct interactions with MCM10 and WDHD1. The primase subunit of the polymerase alpha complex initiates DNA synthesis by oligomerising short RNA primers on both leading and lagging strands. These primers are initially extended by the polymerase alpha catalytic subunit and subsequently transferred to polymerase delta and polymerase epsilon for processive synthesis on the lagging and leading strand, respectively. The reason this transfer occurs is because the polymerase alpha has limited processivity and lacks intrinsic 3' exonuclease activity for proofreading error, and therefore is not well suited for replicating long complexes. In the cytosol, responsible for a substantial proportion of the physiological concentration of cytosolic RNA:DNA hybrids, which are necessary to prevent spontaneous activation of type I interferon responses. This Mus musculus (Mouse) protein is DNA polymerase alpha catalytic subunit (Pola1).